Consider the following 294-residue polypeptide: Elongation factor Ts (294 aa).

Residues 79–82 (TDFV) form an involved in Mg(2+) ion dislocation from EF-Tu region.

The protein belongs to the EF-Ts family.

The protein localises to the cytoplasm. Its function is as follows. Associates with the EF-Tu.GDP complex and induces the exchange of GDP to GTP. It remains bound to the aminoacyl-tRNA.EF-Tu.GTP complex up to the GTP hydrolysis stage on the ribosome. In Geobacillus sp. (strain WCH70), this protein is Elongation factor Ts.